Reading from the N-terminus, the 464-residue chain is Cysteine--tRNA ligase (464 aa).

Cys-27 contributes to the Zn(2+) binding site. Residues 29-39 (PTVYDDAHLGH) carry the 'HIGH' region motif. The Zn(2+) site is built by Cys-203, His-234, and Glu-238. Residues 266 to 270 (KMSKS) carry the 'KMSKS' region motif. Lys-269 provides a ligand contact to ATP.

It belongs to the class-I aminoacyl-tRNA synthetase family. In terms of assembly, monomer. It depends on Zn(2+) as a cofactor.

It is found in the cytoplasm. It catalyses the reaction tRNA(Cys) + L-cysteine + ATP = L-cysteinyl-tRNA(Cys) + AMP + diphosphate. In Campylobacter concisus (strain 13826), this protein is Cysteine--tRNA ligase.